We begin with the raw amino-acid sequence, 214 residues long: NADH-quinone oxidoreductase subunit C (214 aa).

This sequence belongs to the complex I 30 kDa subunit family. In terms of assembly, NDH-1 is composed of 14 different subunits. Subunits NuoB, C, D, E, F, and G constitute the peripheral sector of the complex.

Its subcellular location is the cell inner membrane. The enzyme catalyses a quinone + NADH + 5 H(+)(in) = a quinol + NAD(+) + 4 H(+)(out). Functionally, NDH-1 shuttles electrons from NADH, via FMN and iron-sulfur (Fe-S) centers, to quinones in the respiratory chain. The immediate electron acceptor for the enzyme in this species is believed to be ubiquinone. Couples the redox reaction to proton translocation (for every two electrons transferred, four hydrogen ions are translocated across the cytoplasmic membrane), and thus conserves the redox energy in a proton gradient. The polypeptide is NADH-quinone oxidoreductase subunit C (Francisella tularensis subsp. holarctica (strain LVS)).